The following is a 720-amino-acid chain: DNA ligase (720 aa).

Residues 57–61 (DAEYD), 106–107 (SL), and Glu140 contribute to the NAD(+) site. Lys142 functions as the N6-AMP-lysine intermediate in the catalytic mechanism. 4 residues coordinate NAD(+): Arg163, Glu200, Lys316, and Lys340. Cys434, Cys437, Cys458, and Cys464 together coordinate Zn(2+). Positions 643–720 (AAASPVSGKT…TEDEWFELVG (78 aa)) constitute a BRCT domain.

The protein belongs to the NAD-dependent DNA ligase family. LigA subfamily. It depends on Mg(2+) as a cofactor. Requires Mn(2+) as cofactor.

It carries out the reaction NAD(+) + (deoxyribonucleotide)n-3'-hydroxyl + 5'-phospho-(deoxyribonucleotide)m = (deoxyribonucleotide)n+m + AMP + beta-nicotinamide D-nucleotide.. Functionally, DNA ligase that catalyzes the formation of phosphodiester linkages between 5'-phosphoryl and 3'-hydroxyl groups in double-stranded DNA using NAD as a coenzyme and as the energy source for the reaction. It is essential for DNA replication and repair of damaged DNA. The sequence is that of DNA ligase from Xanthobacter autotrophicus (strain ATCC BAA-1158 / Py2).